The chain runs to 569 residues: Proline--tRNA ligase (569 aa).

This sequence belongs to the class-II aminoacyl-tRNA synthetase family. ProS type 1 subfamily. In terms of assembly, homodimer.

It localises to the cytoplasm. It carries out the reaction tRNA(Pro) + L-proline + ATP = L-prolyl-tRNA(Pro) + AMP + diphosphate. Catalyzes the attachment of proline to tRNA(Pro) in a two-step reaction: proline is first activated by ATP to form Pro-AMP and then transferred to the acceptor end of tRNA(Pro). As ProRS can inadvertently accommodate and process non-cognate amino acids such as alanine and cysteine, to avoid such errors it has two additional distinct editing activities against alanine. One activity is designated as 'pretransfer' editing and involves the tRNA(Pro)-independent hydrolysis of activated Ala-AMP. The other activity is designated 'posttransfer' editing and involves deacylation of mischarged Ala-tRNA(Pro). The misacylated Cys-tRNA(Pro) is not edited by ProRS. This is Proline--tRNA ligase from Shewanella woodyi (strain ATCC 51908 / MS32).